We begin with the raw amino-acid sequence, 106 residues long: Large ribosomal subunit protein uL24 (106 aa).

Belongs to the universal ribosomal protein uL24 family. In terms of assembly, part of the 50S ribosomal subunit.

In terms of biological role, one of two assembly initiator proteins, it binds directly to the 5'-end of the 23S rRNA, where it nucleates assembly of the 50S subunit. Its function is as follows. One of the proteins that surrounds the polypeptide exit tunnel on the outside of the subunit. This is Large ribosomal subunit protein uL24 from Delftia acidovorans (strain DSM 14801 / SPH-1).